The sequence spans 302 residues: Ectoine dioxygenase (302 aa).

Gln128 contributes to the L-ectoine binding site. Lys134 contributes to the 2-oxoglutarate binding site. Residues His145, Asp147, and His246 each coordinate Fe cation.

The protein belongs to the PhyH family. EctD subfamily. Homodimer. It depends on Fe(2+) as a cofactor.

The enzyme catalyses L-ectoine + 2-oxoglutarate + O2 = 5-hydroxyectoine + succinate + CO2. Involved in the biosynthesis of 5-hydroxyectoine, called compatible solute, which helps organisms to survive extreme osmotic stress by acting as a highly soluble organic osmolyte. Catalyzes the 2-oxoglutarate-dependent selective hydroxylation of L-ectoine to yield (4S,5S)-5-hydroxyectoine. The chain is Ectoine dioxygenase from Stutzerimonas stutzeri (strain A1501) (Pseudomonas stutzeri).